The primary structure comprises 107 residues: Thioredoxin (107 aa).

A Thioredoxin domain is found at 2 to 107 (PSPIQVTDFS…TLTNALKKYL (106 aa)). Catalysis depends on nucleophile residues Cys32 and Cys35. A disulfide bond links Cys32 and Cys35.

Belongs to the thioredoxin family.

Its subcellular location is the plastid. The protein resides in the chloroplast. Functionally, participates in various redox reactions through the reversible oxidation of its active center dithiol to a disulfide and catalyzes dithiol-disulfide exchange reactions. The polypeptide is Thioredoxin (trxA) (Cyanidium caldarium (Red alga)).